The sequence spans 217 residues: Probable GTP-binding protein EngB (217 aa).

One can recognise an EngB-type G domain in the interval 29–213 (GPPEVAFAGR…RQAIAETVGI (185 aa)). GTP is bound by residues 37-44 (GRSNVGKS), 64-68 (GRTQE), 91-94 (DMPG), 158-161 (TKTD), and 192-194 (TSS). Residues S44 and T66 each contribute to the Mg(2+) site.

Belongs to the TRAFAC class TrmE-Era-EngA-EngB-Septin-like GTPase superfamily. EngB GTPase family. Requires Mg(2+) as cofactor.

In terms of biological role, necessary for normal cell division and for the maintenance of normal septation. This is Probable GTP-binding protein EngB from Rhizobium etli (strain ATCC 51251 / DSM 11541 / JCM 21823 / NBRC 15573 / CFN 42).